A 459-amino-acid polypeptide reads, in one-letter code: Zinc finger protein 213 (459 aa).

The 82-residue stretch at 45–126 (RQRFRQFCYG…VALVEDLQKQ (82 aa)) folds into the SCAN box domain. The tract at residues 128 to 188 (VKAWRQDVPS…ALLKEGRPGE (61 aa)) is disordered. Residues 202-292 (VALGDIPFYF…ENRPRAALGP (91 aa)) form the KRAB domain. 5 C2H2-type zinc fingers span residues 317-339 (HSCG…QRTH), 345-367 (HKCP…QGVH), 373-395 (FSCS…QRIH), 401-423 (FGCS…RRVH), and 429-451 (FGCG…QSLH).

The protein belongs to the krueppel C2H2-type zinc-finger protein family. Widely expressed with highest levels in testis.

Its subcellular location is the nucleus. Its function is as follows. May be involved in transcriptional regulation. This chain is Zinc finger protein 213 (ZNF213), found in Homo sapiens (Human).